The primary structure comprises 207 residues: Redox-sensing transcriptional repressor Rex (207 aa).

The segment at residues 15-54 (LYYRCLNRLYEEGIEYVASKDIAERLGIKSSQVRKDLSYF) is a DNA-binding region (H-T-H motif). Residue 89-94 (GAGNIG) coordinates NAD(+).

The protein belongs to the transcriptional regulatory Rex family. As to quaternary structure, homodimer.

It is found in the cytoplasm. Functionally, modulates transcription in response to changes in cellular NADH/NAD(+) redox state. This Thermosipho africanus (strain TCF52B) protein is Redox-sensing transcriptional repressor Rex.